The following is a 394-amino-acid chain: Elongation factor Tu (394 aa).

The region spanning 10–204 (KPHVNVGTIG…ALDRYIPTPE (195 aa)) is the tr-type G domain. A G1 region spans residues 19–26 (GHVDHGKT). GTP is bound at residue 19 to 26 (GHVDHGKT). Position 26 (T26) interacts with Mg(2+). The G2 stretch occupies residues 60 to 64 (GITIN). The G3 stretch occupies residues 81–84 (DCPG). GTP is bound by residues 81–85 (DCPGH) and 136–139 (NKCD). Residues 136-139 (NKCD) are G4. Residues 174–176 (SAL) form a G5 region.

The protein belongs to the TRAFAC class translation factor GTPase superfamily. Classic translation factor GTPase family. EF-Tu/EF-1A subfamily. In terms of assembly, monomer.

The protein resides in the cytoplasm. It carries out the reaction GTP + H2O = GDP + phosphate + H(+). In terms of biological role, GTP hydrolase that promotes the GTP-dependent binding of aminoacyl-tRNA to the A-site of ribosomes during protein biosynthesis. The protein is Elongation factor Tu of Neisseria gonorrhoeae.